The sequence spans 142 residues: Transcription antitermination protein NusB (142 aa).

This sequence belongs to the NusB family.

Functionally, involved in transcription antitermination. Required for transcription of ribosomal RNA (rRNA) genes. Binds specifically to the boxA antiterminator sequence of the ribosomal RNA (rrn) operons. This chain is Transcription antitermination protein NusB, found in Anaeromyxobacter dehalogenans (strain 2CP-1 / ATCC BAA-258).